We begin with the raw amino-acid sequence, 250 residues long: MPITANTLYRDTMNFTRNQFISILMMSLLTAFITVILNHALSPSVDELRILSSSGSDLSSSVESGLMDLIQQMTPEQQTVLLKMSAAGTFAALVGNVLLTGGVLMLIQLVSDGHRTSALRAIGASTPFLLRLLFLILLCTLLIQLGMMLLVIPGVLLAIALSLSPVIVVTEKSGIFSAIKASTKLAYGNLRATAPAIVMWLLAKIAILLVVSKLPISSPTVLGVVLNGLSNLISAILLIYLFRLYMLLRA.

A run of 6 helical transmembrane segments spans residues 20–40 (FISI…LNHA), 90–110 (FAAL…IQLV), 132–152 (LLFL…LLVI), 156–176 (LLAI…SGIF), 192–212 (ATAP…LVVS), and 222–242 (LGVV…IYLF).

This sequence belongs to the UPF0259 family.

The protein localises to the cell inner membrane. The protein is UPF0259 membrane protein PC1_1998 of Pectobacterium carotovorum subsp. carotovorum (strain PC1).